The sequence spans 137 residues: Small ribosomal subunit protein uS12 (137 aa).

The interval 1-55 (MPTINQLVRKPRKSKTKQSDSPALNRGFNSKKKQFTNLNSPQKRGVCTRVGTMTP) is disordered. Aspartate 102 bears the 3-methylthioaspartic acid mark. The interval 118-137 (SGVDGRRQGRSLYGTKKPKN) is disordered.

Belongs to the universal ribosomal protein uS12 family. Part of the 30S ribosomal subunit. Contacts proteins S8 and S17. May interact with IF1 in the 30S initiation complex.

In terms of biological role, with S4 and S5 plays an important role in translational accuracy. Interacts with and stabilizes bases of the 16S rRNA that are involved in tRNA selection in the A site and with the mRNA backbone. Located at the interface of the 30S and 50S subunits, it traverses the body of the 30S subunit contacting proteins on the other side and probably holding the rRNA structure together. The combined cluster of proteins S8, S12 and S17 appears to hold together the shoulder and platform of the 30S subunit. In Staphylococcus epidermidis (strain ATCC 35984 / DSM 28319 / BCRC 17069 / CCUG 31568 / BM 3577 / RP62A), this protein is Small ribosomal subunit protein uS12.